Consider the following 36-residue polypeptide: Photosystem I reaction center subunit VIII (36 aa).

A helical membrane pass occupies residues 7–29 (PSILVPLVGLVFPAITLASLFIY).

The protein belongs to the PsaI family.

The protein localises to the plastid. It localises to the chloroplast thylakoid membrane. In terms of biological role, may help in the organization of the PsaL subunit. This chain is Photosystem I reaction center subunit VIII, found in Anthoceros angustus (Hornwort).